The chain runs to 435 residues: ATP-dependent protease ATPase subunit HslU (435 aa).

ATP contacts are provided by residues I18, 60 to 65 (GVGKTE), D248, E313, and R385.

The protein belongs to the ClpX chaperone family. HslU subfamily. In terms of assembly, a double ring-shaped homohexamer of HslV is capped on each side by a ring-shaped HslU homohexamer. The assembly of the HslU/HslV complex is dependent on binding of ATP.

Its subcellular location is the cytoplasm. Functionally, ATPase subunit of a proteasome-like degradation complex; this subunit has chaperone activity. The binding of ATP and its subsequent hydrolysis by HslU are essential for unfolding of protein substrates subsequently hydrolyzed by HslV. HslU recognizes the N-terminal part of its protein substrates and unfolds these before they are guided to HslV for hydrolysis. The chain is ATP-dependent protease ATPase subunit HslU from Roseobacter denitrificans (strain ATCC 33942 / OCh 114) (Erythrobacter sp. (strain OCh 114)).